We begin with the raw amino-acid sequence, 558 residues long: Polysialic acid transport protein KpsD (558 aa).

The first 20 residues, 1–20, serve as a signal peptide directing secretion; the sequence is MKLFKSILLIAACHAAQASA.

It to E.coli K1 KpsD.

The protein resides in the periplasm. Involved in the translocation of the polysialic acid capsule across the outer membrane to the cell surface. May function as the periplasmic binding element of the PSA transport system, in which it transiently interacts with the membrane component of the transporter, binds polysaccharide and transports the polymer to a component in the outer membrane. The sequence is that of Polysialic acid transport protein KpsD (kpsD) from Escherichia coli.